Consider the following 92-residue polypeptide: Mediator-associated protein 3 (92 aa).

The DEK-C domain occupies 13–70 (KDLRRKIKKTVKKILESSNLYKITEIKAREEASLKLDLDLSQDPYKVIVKEEVENFLE).

As to quaternary structure, associated with the Mediator complex.

Its subcellular location is the nucleus. The protein is Mediator-associated protein 3 of Arabidopsis thaliana (Mouse-ear cress).